A 155-amino-acid chain; its full sequence is 6,7-dimethyl-8-ribityllumazine synthase (155 aa).

5-amino-6-(D-ribitylamino)uracil is bound by residues Phe24, 58–60, and 82–84; these read AFE and VII. A (2S)-2-hydroxy-3-oxobutyl phosphate-binding site is contributed by 87-88; the sequence is ST. The active-site Proton donor is His90. Phe115 serves as a coordination point for 5-amino-6-(D-ribitylamino)uracil. Arg129 is a binding site for (2S)-2-hydroxy-3-oxobutyl phosphate.

This sequence belongs to the DMRL synthase family.

The enzyme catalyses (2S)-2-hydroxy-3-oxobutyl phosphate + 5-amino-6-(D-ribitylamino)uracil = 6,7-dimethyl-8-(1-D-ribityl)lumazine + phosphate + 2 H2O + H(+). It participates in cofactor biosynthesis; riboflavin biosynthesis; riboflavin from 2-hydroxy-3-oxobutyl phosphate and 5-amino-6-(D-ribitylamino)uracil: step 1/2. In terms of biological role, catalyzes the formation of 6,7-dimethyl-8-ribityllumazine by condensation of 5-amino-6-(D-ribitylamino)uracil with 3,4-dihydroxy-2-butanone 4-phosphate. This is the penultimate step in the biosynthesis of riboflavin. The polypeptide is 6,7-dimethyl-8-ribityllumazine synthase (Chlorobaculum tepidum (strain ATCC 49652 / DSM 12025 / NBRC 103806 / TLS) (Chlorobium tepidum)).